Here is a 229-residue protein sequence, read N- to C-terminus: Large ribosomal RNA subunit accumulation protein YCED homolog 2, chloroplastic (229 aa).

A chloroplast-targeting transit peptide spans 1–42 (MDVRCLISPNLLNSKIKVSGNTHHLPFSSLSKKHQASSPIQA).

Belongs to the DUF177 domain family.

Its subcellular location is the plastid. It localises to the chloroplast. Its function is as follows. May play a role in synthesis, processing and/or stability of 23S rRNA. This chain is Large ribosomal RNA subunit accumulation protein YCED homolog 2, chloroplastic, found in Arabidopsis thaliana (Mouse-ear cress).